The following is a 183-amino-acid chain: Thioredoxin/glutathione peroxidase BtuE (183 aa).

Residue C37 is part of the active site.

This sequence belongs to the glutathione peroxidase family. BtuE subfamily.

Its subcellular location is the periplasm. It catalyses the reaction 2 glutathione + H2O2 = glutathione disulfide + 2 H2O. The catalysed reaction is a hydroperoxide + [thioredoxin]-dithiol = an alcohol + [thioredoxin]-disulfide + H2O. Functionally, non-specific peroxidase that can use thioredoxin or glutathione as a reducing agent. In vitro, utilizes preferentially thioredoxin A to decompose hydrogen peroxide as well as cumene-, tert-butyl-, and linoleic acid hydroperoxides, suggesting that it may have one or more organic hydroperoxide as its physiological substrate. The chain is Thioredoxin/glutathione peroxidase BtuE from Escherichia coli (strain K12).